Here is a 102-residue protein sequence, read N- to C-terminus: Co-chaperonin GroES (102 aa).

Belongs to the GroES chaperonin family. In terms of assembly, heptamer of 7 subunits arranged in a ring. Interacts with the chaperonin GroEL.

The protein resides in the cytoplasm. Its function is as follows. Together with the chaperonin GroEL, plays an essential role in assisting protein folding. The GroEL-GroES system forms a nano-cage that allows encapsulation of the non-native substrate proteins and provides a physical environment optimized to promote and accelerate protein folding. GroES binds to the apical surface of the GroEL ring, thereby capping the opening of the GroEL channel. The sequence is that of Co-chaperonin GroES from Chlamydia caviae (strain ATCC VR-813 / DSM 19441 / 03DC25 / GPIC) (Chlamydophila caviae).